A 532-amino-acid polypeptide reads, in one-letter code: Variant surface glycoprotein ILTAT 1.23 (532 aa).

Residues 1–23 (MFKNINAAVLLLILSTRNDYANA) form the signal peptide. The N-linked (GlcNAc...) asparagine glycan is linked to N66. Disordered stretches follow at residues 79 to 107 (APKKGKQENSNNADGAPRSQEKTHARNHA) and 408 to 504 (MQAG…DQDK). Residue N419 is glycosylated (N-linked (GlcNAc...) asparagine). Residues 427–445 (CKWEEKDGKDGKCVADDSK) show a composition bias toward basic and acidic residues. Low complexity predominate over residues 450 to 470 (GNAPAGAGDGTAGTTTTPNCA). 2 stretches are compositionally biased toward basic and acidic residues: residues 472–484 (HTDKTKCEEENKG) and 494–504 (KGKEGESDQDK). N509 is a glycosylation site (N-linked (GlcNAc...) asparagine). A lipid anchor (GPI-anchor amidated asparagine) is attached at N509. A propeptide spans 510-532 (GSFLAKKKFALSVVSAAFTALLF) (removed in mature form).

Its subcellular location is the cell membrane. VSG forms a coat on the surface of the parasite. The trypanosome evades the immune response of the host by expressing a series of antigenically distinct VSGs from an estimated 1000 VSG genes. The sequence is that of Variant surface glycoprotein ILTAT 1.23 from Trypanosoma brucei brucei.